A 364-amino-acid chain; its full sequence is Putative F-box/kelch-repeat protein At1g12170 (364 aa).

An F-box domain is found at 1–50 (MMHVILPWELVEEILYRVPPLSLTRFKIVCKQWNTLFKSKSFVNNHLVRV). Kelch repeat units follow at residues 156–205 (SIYN…LNGN) and 328–364 (CVYI…IPVP).

This Arabidopsis thaliana (Mouse-ear cress) protein is Putative F-box/kelch-repeat protein At1g12170.